The sequence spans 483 residues: Docking protein 1 (483 aa).

Methionine 1 carries the post-translational modification N-acetylmethionine. One can recognise a PH domain in the interval 4–119 (AVMEGPLFLQ…WVQTLCQNAF (116 aa)). Position 48 is a phosphoserine (serine 48). Residues 151–259 (EGSQFWVTVQ…HRQKIQGKAG (109 aa)) form the IRS-type PTB domain. A phosphoserine mark is found at serine 269 and serine 291. The disordered stretch occupies residues 293 to 326 (PALYSEPLDSLRIPPGPSQDSLYSDPLDSTPARA). Phosphotyrosine is present on residues tyrosine 296, tyrosine 337, tyrosine 362, tyrosine 377, tyrosine 398, and tyrosine 409. The tract at residues 409–483 (YAVPPPRSTK…RTGAKSEGST (75 aa)) is disordered. Over residues 411–424 (VPPPRSTKPFPAPK) the composition is skewed to pro residues. Serine 416 bears the Phosphoserine mark. A compositionally biased stretch (polar residues) spans 434 to 460 (GAATGSGSQGHSSDTALYSQVQKSGAS). Tyrosine 451 carries the post-translational modification Phosphotyrosine. The residue at position 462 (serine 462) is a Phosphoserine.

The protein belongs to the DOK family. Type A subfamily. Interacts with RasGAP, INPP5D/SHIP1 and ABL1. Interacts directly with phosphorylated ITGB3. Interacts with SRMS (via the SH2 and SH3 domains). In terms of processing, constitutively tyrosine-phosphorylated. Phosphorylated by TEC. Phosphorylated by LYN. Phosphorylated on tyrosine residues by the insulin receptor kinase. Results in the negative regulation of the insulin signaling pathway. Phosphorylated on tyrosine residues by SRMS.

The protein localises to the cytoplasm. The protein resides in the nucleus. In terms of biological role, DOK proteins are enzymatically inert adaptor or scaffolding proteins. They provide a docking platform for the assembly of multimolecular signaling complexes. DOK1 appears to be a negative regulator of the insulin signaling pathway. Modulates integrin activation by competing with talin for the same binding site on ITGB3. The polypeptide is Docking protein 1 (DOK1) (Bos taurus (Bovine)).